The following is a 431-amino-acid chain: UDP-N-acetylglucosamine 1-carboxyvinyltransferase (431 aa).

A phosphoenolpyruvate-binding site is contributed by 22–23 (KN). Residue Arg-93 coordinates UDP-N-acetyl-alpha-D-glucosamine. Catalysis depends on Cys-117, which acts as the Proton donor. Position 117 is a 2-(S-cysteinyl)pyruvic acid O-phosphothioketal (Cys-117). 2 residues coordinate UDP-N-acetyl-alpha-D-glucosamine: Asp-307 and Val-329.

The protein belongs to the EPSP synthase family. MurA subfamily.

The protein resides in the cytoplasm. The enzyme catalyses phosphoenolpyruvate + UDP-N-acetyl-alpha-D-glucosamine = UDP-N-acetyl-3-O-(1-carboxyvinyl)-alpha-D-glucosamine + phosphate. The protein operates within cell wall biogenesis; peptidoglycan biosynthesis. Functionally, cell wall formation. Adds enolpyruvyl to UDP-N-acetylglucosamine. In Nitrosococcus oceani (strain ATCC 19707 / BCRC 17464 / JCM 30415 / NCIMB 11848 / C-107), this protein is UDP-N-acetylglucosamine 1-carboxyvinyltransferase.